A 708-amino-acid chain; its full sequence is F-box protein MAX2 homolog A (708 aa).

The 48-residue stretch at 2–49 folds into the F-box domain; it reads ATQLNDLPDVILSNIIAAVTDVRSRNSTSFVCRKWLVLERSTRVSLTL.

As to quaternary structure, part of a putative SCF (SKP1/Cullin/F-box) ubiquitin ligase complex. Interacts with DAD2. Interacts with KAI2IA in the presence of (-)-germacrene D. Mainly expressed in fully expanded leaves, lateral roots, axillary and shoot apex, and, to a lower extent, in internodes and nodes.

The protein resides in the nucleus. Component of SCF(ASK-cullin-F-box) E3 ubiquitin ligase complexes, which may mediate the ubiquitination and subsequent proteasomal degradation of target proteins. Is necessary for responses to strigolactones and may be involved in the ubiquitin-mediated degradation of specific proteins that activate axillary growth. Targets probably SMAX1A to degradation upon the formation of an E3 SCF ubiquitin ligase complex (ASK-cullin-F-box) containing MAX2A and KAI2IA in response to (-)-germacrene D in the stigma. This is F-box protein MAX2 homolog A from Petunia hybrida (Petunia).